We begin with the raw amino-acid sequence, 438 residues long: Probable tRNA pseudouridine synthase D (438 aa).

The Nucleophile role is filled by Asp86. In terms of domain architecture, TRUD spans 165–390 (GVPNFFGIQR…SKGTRREVLL (226 aa)).

It belongs to the pseudouridine synthase TruD family.

It carries out the reaction uridine(13) in tRNA = pseudouridine(13) in tRNA. Functionally, could be responsible for synthesis of pseudouridine from uracil-13 in transfer RNAs. The chain is Probable tRNA pseudouridine synthase D from Methanosarcina mazei (strain ATCC BAA-159 / DSM 3647 / Goe1 / Go1 / JCM 11833 / OCM 88) (Methanosarcina frisia).